A 229-amino-acid chain; its full sequence is Large ribosomal subunit protein uL1 (229 aa).

Belongs to the universal ribosomal protein uL1 family. As to quaternary structure, part of the 50S ribosomal subunit.

Binds directly to 23S rRNA. The L1 stalk is quite mobile in the ribosome, and is involved in E site tRNA release. Functionally, protein L1 is also a translational repressor protein, it controls the translation of the L11 operon by binding to its mRNA. The chain is Large ribosomal subunit protein uL1 from Mycoplasmopsis pulmonis (strain UAB CTIP) (Mycoplasma pulmonis).